Consider the following 201-residue polypeptide: Small ribosomal subunit protein uS4c (201 aa).

Residues G20–Q43 are disordered. The segment covering D31 to I41 has biased composition (polar residues). Residues M89 to K157 form the S4 RNA-binding domain.

The protein belongs to the universal ribosomal protein uS4 family. As to quaternary structure, part of the 30S ribosomal subunit. Contacts protein S5. The interaction surface between S4 and S5 is involved in control of translational fidelity.

It is found in the plastid. The protein resides in the chloroplast. Its function is as follows. One of the primary rRNA binding proteins, it binds directly to 16S rRNA where it nucleates assembly of the body of the 30S subunit. With S5 and S12 plays an important role in translational accuracy. This chain is Small ribosomal subunit protein uS4c (rps4), found in Cycas taitungensis (Prince sago).